Here is a 340-residue protein sequence, read N- to C-terminus: Alpha-1,4-N-acetylglucosaminyltransferase (340 aa).

The Cytoplasmic segment spans residues 1 to 4; that stretch reads MRKE. A helical; Signal-anchor for type II membrane protein membrane pass occupies residues 5-25; that stretch reads LQLSLSVTLLLVCGFLYQFTL. Over 26–340 the chain is Lumenal; it reads KSSCLFCLPS…VTGELGPGNK (315 aa). 2 N-linked (GlcNAc...) asparagine glycosylation sites follow: N99 and N138. The short motif at 167–169 is the DXD motif element; it reads DTD. N-linked (GlcNAc...) asparagine glycans are attached at residues N251 and N282.

Belongs to the glycosyltransferase 32 family. In terms of tissue distribution, detected in stomach and pancreas.

The protein localises to the golgi apparatus membrane. It functions in the pathway protein modification; protein glycosylation. In terms of biological role, catalyzes the transfer of N-acetylglucosamine (GlcNAc) to core 2 branched O-glycans. Necessary for the synthesis of type III mucin which is specifically produced in the stomach, duodenum, and pancreatic duct. May protect against inflammation-associated gastric adenocarcinomas. In Homo sapiens (Human), this protein is Alpha-1,4-N-acetylglucosaminyltransferase (A4GNT).